A 368-amino-acid polypeptide reads, in one-letter code: Probable deoxyhypusine synthase (368 aa).

Residues 100–104 (SNLVS), 126–128 (TAG), glutamate 132, and aspartate 233 contribute to the NAD(+) site. 131–132 (EE) contacts spermidine. Aspartate 238 contributes to the spermidine binding site. Residue glycine 278 participates in NAD(+) binding. Histidine 283 contacts spermidine. 303–304 (TA) contacts NAD(+). Spermidine-binding positions include 309–311 (GSD) and 318–324 (EAISWGK). The Nucleophile role is filled by lysine 324. 337–338 (EA) is an NAD(+) binding site.

This sequence belongs to the deoxyhypusine synthase family. Requires NAD(+) as cofactor.

It catalyses the reaction [eIF5A protein]-L-lysine + spermidine = [eIF5A protein]-deoxyhypusine + propane-1,3-diamine. It participates in protein modification; eIF5A hypusination. Functionally, catalyzes the NAD-dependent oxidative cleavage of spermidine and the subsequent transfer of the butylamine moiety of spermidine to the epsilon-amino group of a specific lysine residue of the eIF-5A precursor protein to form the intermediate deoxyhypusine residue. This chain is Probable deoxyhypusine synthase, found in Drosophila melanogaster (Fruit fly).